Consider the following 181-residue polypeptide: MSQSLKTYYKEKVVPLLMETFEYKNIHEVPKITKITINRGLGEASKNNKALESSVQELAIISGQQPVITKAKKSVAGFKIRDGMPVGIAVTLRSKMMYAFLERLIHLSLPRIRDFKGISVQLFDGRGNYNLGLKEQLIFPEIEYDRIDQIRGMDIAITTTAKTQQEGIALLKALGMPFNDN.

It belongs to the universal ribosomal protein uL5 family. As to quaternary structure, part of the 50S ribosomal subunit; contacts the 5S rRNA.

The protein localises to the plastid. It is found in the chloroplast. Functionally, binds 5S rRNA, forms part of the central protuberance of the 50S subunit. The polypeptide is Large ribosomal subunit protein uL5c (rpl5) (Rhodomonas salina (Cryptomonas salina)).